The sequence spans 372 residues: 3-ketodihydrosphingosine reductase TSC10 (372 aa).

Valine 64 provides a ligand contact to NADP(+). The NADPH site is built by glycine 67, serine 69, glycine 71, arginine 92, lysine 96, aspartate 123, and leucine 124. The GXSXG signature appears at 67 to 71; that stretch reads GGSQG. Aspartate 123 contacts NADP(+). Serine 205 serves as the catalytic Proton donor. 3 residues coordinate NADP(+): tyrosine 219, lysine 223, and serine 254. Residue tyrosine 219 is the Proton acceptor of the active site. Lysine 223 serves as the catalytic Lowers pKa of active site Tyr. Residues 321–341 traverse the membrane as a helical segment; the sequence is LLQIPLAIFMCIFSPVWNAFV.

It belongs to the short-chain dehydrogenases/reductases (SDR) family.

The protein resides in the endoplasmic reticulum membrane. It catalyses the reaction sphinganine + NADP(+) = 3-oxosphinganine + NADPH + H(+). It functions in the pathway lipid metabolism; sphingolipid metabolism. Functionally, catalyzes the reduction of 3'-oxosphinganine (3-ketodihydrosphingosine/KDS) to sphinganine (dihydrosphingosine/DHS), the second step of de novo sphingolipid biosynthesis. This chain is 3-ketodihydrosphingosine reductase TSC10 (TSC10), found in Yarrowia lipolytica (strain CLIB 122 / E 150) (Yeast).